Reading from the N-terminus, the 869-residue chain is Leucine--tRNA ligase (869 aa).

Positions 42 to 52 match the 'HIGH' region motif; sequence PYPSGNLHMGH. Residues 622–626 carry the 'KMSKS' region motif; it reads KMSKS. Lysine 625 contacts ATP.

Belongs to the class-I aminoacyl-tRNA synthetase family.

It localises to the cytoplasm. The enzyme catalyses tRNA(Leu) + L-leucine + ATP = L-leucyl-tRNA(Leu) + AMP + diphosphate. This chain is Leucine--tRNA ligase, found in Synechocystis sp. (strain ATCC 27184 / PCC 6803 / Kazusa).